The chain runs to 720 residues: Secreted RxLR effector protein 138 (720 aa).

The N-terminal stretch at 1–20 (MRSAFYVAIVLLVAAGSQTA) is a signal peptide. The RxLR-dEER signature appears at 56–71 (RNLKDDFMFSAGDEER). Residues 264 to 335 (ESNTRKRNNV…VAPPEPSRLD (72 aa)) form a disordered region. Over residues 320–335 (KQHDHRVAPPEPSRLD) the composition is skewed to basic and acidic residues. A glycan (N-linked (GlcNAc...) asparagine) is linked at asparagine 609.

This sequence belongs to the RxLR effector family.

The protein localises to the secreted. It localises to the host nucleus. Secreted effector that acts as an elicitor that induces cell death in host plant cells. The sequence is that of Secreted RxLR effector protein 138 from Plasmopara viticola (Downy mildew of grapevine).